Consider the following 671-residue polypeptide: Condensin complex subunit 2 (671 aa).

Residues 1–24 are compositionally biased toward polar residues; that stretch reads MDESLTPNPKQKPASTTTRIQAPT. Disordered regions lie at residues 1–33, 404–444, and 510–564; these read MDES…GSND, NSWA…KQAE, and RRKN…ISQP. The Kleisin-gamma middle domain (GM domain) involved in chromosome-binding signature appears at 406 to 415; that stretch reads WAGPDHWKYR. Over residues 536 to 556 the composition is skewed to acidic residues; the sequence is VYDDDDGPFDDNENDQSDAED.

The protein belongs to the CND2 (condensin subunit 2) family. As to quaternary structure, component of the condensin complex. Mostly expressed in flower buds and flowers, and, to a lower extent, in roots, stems, leaves and seedlings.

It localises to the cytoplasm. The protein localises to the chromosome. In terms of biological role, regulatory subunit of the condensin complex, a complex required for conversion of interphase chromatin into mitotic-like condense chromosomes. The condensin complex probably introduces positive supercoils into relaxed DNA in the presence of type I topoisomerases and converts nicked DNA into positive knotted forms in the presence of type II topoisomerases. Essential protein. The chain is Condensin complex subunit 2 (CAPH) from Arabidopsis thaliana (Mouse-ear cress).